Reading from the N-terminus, the 284-residue chain is uncharacterized protein (284 aa).

Composition is skewed to low complexity over residues 110-123 (NGPR…PNNG) and 130-149 (NGPM…NGPN). The tract at residues 110-176 (NGPRGRQMNG…PNEFDSDDDD (67 aa)) is disordered.

It is found in the virion. This is an uncharacterized protein from Acanthamoeba polyphaga mimivirus (APMV).